Here is a 1028-residue protein sequence, read N- to C-terminus: U2 snRNP-associated SURP motif-containing protein (1028 aa).

2 disordered regions span residues 1-111 (MADK…EDEK) and 141-272 (VNAA…DPST). A2 bears the N-acetylalanine mark. The segment covering 7 to 16 (GGSQKASSKT) has biased composition (polar residues). Positions 45-54 (TRPKSPRKHN) are enriched in basic residues. Basic and acidic residues predominate over residues 55–64 (YRNESARESL). S67 is subject to Phosphoserine. Residue K80 forms a Glycyl lysine isopeptide (Lys-Gly) (interchain with G-Cter in SUMO2) linkage. A coiled-coil region spans residues 92-121 (AKRTLSKKEQEELKKKEDEKAAAEIYEEFL). 2 stretches are compositionally biased toward basic and acidic residues: residues 97–111 (SKKEQEELKKKEDEK) and 144–155 (AKEEHETDEKRG). Glycyl lysine isopeptide (Lys-Gly) (interchain with G-Cter in SUMO2) cross-links involve residues K145 and K168. Over residues 169–178 (NPPNQSSNER) the composition is skewed to polar residues. Basic and acidic residues predominate over residues 186 to 222 (ETKKPPLKKGEKEKKKSNLELFKEELKQIQEERDERH). Residues 192–232 (LKKGEKEKKKSNLELFKEELKQIQEERDERHKTKGRLSRFE) are a coiled coil. At S202 the chain carries Phosphoserine. A Glycyl lysine isopeptide (Lys-Gly) (interchain with G-Cter in SUMO2) cross-link involves residue K208. A Phosphoserine modification is found at S236. A compositionally biased stretch (basic and acidic residues) spans 239–249 (DGQRRSMDAPS). Positions 273 to 354 (TNLYLGNINP…FEMKLGWGKA (82 aa)) constitute an RRM domain. The SURP motif repeat unit spans residues 429–472 (LIHRMIEFVVREGPMFEAMIMNREINNPMFRFLFENQTPAHVYY). Position 484 is a phosphoserine (S484). A CID domain is found at 533–678 (LKEEQRDKLE…KLQNIFLGLV (146 aa)). Position 718 is a phosphothreonine (T718). Glycyl lysine isopeptide (Lys-Gly) (interchain with G-Cter in SUMO2) cross-links involve residues K747 and K748. K759 bears the N6-acetyllysine; alternate mark. K759 participates in a covalent cross-link: Glycyl lysine isopeptide (Lys-Gly) (interchain with G-Cter in SUMO2); alternate. Disordered stretches follow at residues 777–840 (KWEL…EEKR) and 854–1028 (QDEL…KNKH). Residues 779-809 (ELFDQHEESEEEENQNQEEESEDEEDTQSSK) are a coiled coil. Over residues 785-805 (EESEEEENQNQEEESEDEEDT) the composition is skewed to acidic residues. 3 positions are modified to phosphoserine: S787, S799, and S810. 2 stretches are compositionally biased toward basic and acidic residues: residues 809–840 (KSEEHHLYSNPIKEEMTESKFSKYSEMSEEKR) and 873–921 (QVEH…TPTR). Residues K821, K828, and K831 each participate in a glycyl lysine isopeptide (Lys-Gly) (interchain with G-Cter in SUMO2) cross-link. The stretch at 836–914 (SEEKRAKLRE…ESRSKDEKEK (79 aa)) forms a coiled coil. A Phosphothreonine modification is found at T930. Phosphoserine occurs at positions 945 and 947. The segment covering 949-979 (KSERSERSERSHKESSRSRSSHKDSPRDVSK) has biased composition (basic and acidic residues). A compositionally biased stretch (basic residues) spans 990–1028 (TPKRSRRSRSRSPKKSGKKSRSQSRSPHRSHKKSKKNKH).

The protein belongs to the splicing factor SR family. As to quaternary structure, interacts with ERBB4.

Its subcellular location is the nucleus. In Pongo abelii (Sumatran orangutan), this protein is U2 snRNP-associated SURP motif-containing protein (U2SURP).